The chain runs to 163 residues: MPSFDIVSEVDLQEARNAVDNASREVESRFDFRGVEATFELNDANKTIKVLSESDFQVNQLLDILRAKLLKRGIEGTSLDVPEDIVHSGKTWFVEAKLKQGIESAVQKKIVKMIKDSKLKVQAQIQGEEIRVTGKSRDDLQSVMALVRGGDLGQPFQFKNFRD.

This sequence belongs to the YajQ family.

In terms of biological role, nucleotide-binding protein. The chain is Nucleotide-binding protein KPN78578_03700 from Klebsiella pneumoniae subsp. pneumoniae (strain ATCC 700721 / MGH 78578).